Reading from the N-terminus, the 86-residue chain is Class II hydrophobin 2 (86 aa).

A signal peptide spans 1–15 (MQFFAVALFATSALA). 4 cysteine pairs are disulfide-bonded: C18–C67, C28–C58, C29–C41, and C68–C79.

The protein belongs to the cerato-ulmin hydrophobin family. Homodimer. Homodimers further self-assemble to form highly ordered films at water-air interfaces through intermolecular interactions.

It localises to the secreted. Its subcellular location is the spore wall. It is found in the cell wall. In terms of biological role, aerial growth, conidiation, and dispersal of filamentous fungi in the environment rely upon a capability of their secreting small amphipathic proteins called hydrophobins (HPBs) with low sequence identity. Class I can self-assemble into an outermost layer of rodlet bundles on aerial cell surfaces, conferring cellular hydrophobicity that supports fungal growth, development and dispersal; whereas Class II form highly ordered films at water-air interfaces through intermolecular interactions but contribute nothing to the rodlet structure. Hbf2 is a class II hydrophobin that is involved in sporuration. The protein is Class II hydrophobin 2 of Hypocrea jecorina (Trichoderma reesei).